The following is a 124-amino-acid chain: MAITKDDILEAVGAMSVMELNDLVKAFEEKFGVSAAAMAVAAAPGAGGAAAAEEQTEFNVILAEVGANKVGVIKAVREITGLGLKEAKDLVDGAPKAVKEGVDKAAAAEAKKKLEDAGAKVDVK.

Belongs to the bacterial ribosomal protein bL12 family. In terms of assembly, homodimer. Part of the ribosomal stalk of the 50S ribosomal subunit. Forms a multimeric L10(L12)X complex, where L10 forms an elongated spine to which 2 to 4 L12 dimers bind in a sequential fashion. Binds GTP-bound translation factors.

Functionally, forms part of the ribosomal stalk which helps the ribosome interact with GTP-bound translation factors. Is thus essential for accurate translation. The chain is Large ribosomal subunit protein bL12 from Cupriavidus pinatubonensis (strain JMP 134 / LMG 1197) (Cupriavidus necator (strain JMP 134)).